Reading from the N-terminus, the 506-residue chain is DNA nucleotidylexotransferase (506 aa).

Residues 11–17 carry the Nuclear localization signal motif; sequence SQRKRQK. A BRCT domain is found at 27 to 124; it reads GYEIKFNKLV…RPVDLEKKYH (98 aa). The interval 258 to 262 is involved in DNA binding; sequence VGVKT. A 2'-deoxyribonucleoside 5'-triphosphate-binding positions include 333 to 338 and 342 to 345; these read GFRRGK and HDID. The Mg(2+) site is built by D343, D345, and D430. 445–446 serves as a coordination point for a 2'-deoxyribonucleoside 5'-triphosphate; it reads GW.

Belongs to the DNA polymerase type-X family. Mg(2+) is required as a cofactor.

The protein resides in the nucleus. It catalyses the reaction DNA(n) + a 2'-deoxyribonucleoside 5'-triphosphate = DNA(n+1) + diphosphate. In terms of biological role, template-independent DNA polymerase which catalyzes the random addition of deoxynucleoside 5'-triphosphate to the 3'-end of a DNA initiator. One of the in vivo functions of this enzyme is the addition of nucleotides at the junction (N region) of rearranged Ig heavy chain and T-cell receptor gene segments during the maturation of B- and T-cells. The polypeptide is DNA nucleotidylexotransferase (DNTT) (Gallus gallus (Chicken)).